The chain runs to 364 residues: Growth hormone secretagogue receptor type 1 (364 aa).

Residues 1–40 (MWNATPSEEPEPNVTLDLDWDASPGNDSLPDELLPLFPAP) lie on the Extracellular side of the membrane. Residues Asn13 and Asn26 are each glycosylated (N-linked (GlcNAc...) asparagine). Residues 41-66 (LLAGVTATCVALFVVGISGNLLTMLV) form a helical membrane-spanning segment. Topologically, residues 67-72 (VSRFRE) are cytoplasmic. A helical transmembrane segment spans residues 73–96 (LRTTTNLYLSSMAFSDLLIFLCMP). Residues 97–117 (LDLVRLWQYRPWNFGDLLCKL) lie on the Extracellular side of the membrane. Cys115 and Cys197 are joined by a disulfide. A helical membrane pass occupies residues 118–139 (FQFVSESCTYATVLTITALSVE). The Cytoplasmic segment spans residues 140–162 (RYFAICFPLRAKVVVTKGRVKLV). The helical transmembrane segment at 163-183 (ILVIWAVAFCSAGPIFVLVGV) threads the bilayer. The Extracellular portion of the chain corresponds to 184–211 (EHENGTDPRDTNECRATEFAVRSGLLTV). Asn187 is a glycosylation site (N-linked (GlcNAc...) asparagine). The helical transmembrane segment at 212 to 235 (MVWVSSVFFFLPVFCLTVLYSLIG) threads the bilayer. The Cytoplasmic segment spans residues 236-263 (RKLWRRRGDAAVGASLRDQNHKQTVKML). The chain crosses the membrane as a helical span at residues 264 to 285 (AVVVFAFILCWLPFHVGRYLFS). Over 286 to 302 (KSFEPGSLEIAQISQYC) the chain is Extracellular. Residues 303–326 (NLVSFVLFYLSAAINPILYNIMSK) form a helical membrane-spanning segment. The Cytoplasmic segment spans residues 327–364 (KYRVAVFKLLGFESFSQRKLSTLKDESSRAWTKSSINT).

This sequence belongs to the G-protein coupled receptor 1 family.

Its subcellular location is the cell membrane. Functionally, receptor for ghrelin, coupled to G-alpha-11 proteins. Stimulates growth hormone secretion. Also binds other growth hormone releasing peptides (GHRP) (e.g. Met-enkephalin and GHRP-6) as well as non-peptide, low molecular weight secretagogues (e.g. L-692,429, MK-0677, adenosine). The chain is Growth hormone secretagogue receptor type 1 (Ghsr) from Rattus norvegicus (Rat).